A 166-amino-acid chain; its full sequence is Interferon gamma (166 aa).

The N-terminal stretch at 1–23 (MNYTSYILAFQLCVILGSSGCYC) is a signal peptide. The residue at position 24 (Gln24) is a Pyrrolidone carboxylic acid. Asn39 and Asn106 each carry an N-linked (GlcNAc...) asparagine glycan. Residues 147 to 166 (SNLRKRKRRQNQIQGRRASK) are disordered.

Belongs to the type II (or gamma) interferon family. In terms of assembly, homodimer. Interacts with IFNGR1 (via extracellular domain); this interaction promotes IFNGR1 dimerization. In terms of tissue distribution, released primarily from activated T lymphocytes.

It is found in the secreted. Its function is as follows. Type II interferon produced by immune cells such as T-cells and NK cells that plays crucial roles in antimicrobial, antiviral, and antitumor responses by activating effector immune cells and enhancing antigen presentation. Primarily signals through the JAK-STAT pathway after interaction with its receptor IFNGR1 to affect gene regulation. Upon IFNG binding, IFNGR1 intracellular domain opens out to allow association of downstream signaling components JAK2, JAK1 and STAT1, leading to STAT1 activation, nuclear translocation and transcription of IFNG-regulated genes. Many of the induced genes are transcription factors such as IRF1 that are able to further drive regulation of a next wave of transcription. Plays a role in class I antigen presentation pathway by inducing a replacement of catalytic proteasome subunits with immunoproteasome subunits. In turn, increases the quantity, quality, and repertoire of peptides for class I MHC loading. Increases the efficiency of peptide generation also by inducing the expression of activator PA28 that associates with the proteasome and alters its proteolytic cleavage preference. Up-regulates as well MHC II complexes on the cell surface by promoting expression of several key molecules such as cathepsins B/CTSB, H/CTSH, and L/CTSL. Participates in the regulation of hematopoietic stem cells during development and under homeostatic conditions by affecting their development, quiescence, and differentiation. This chain is Interferon gamma (IFNG), found in Lama glama (Llama).